The following is a 123-amino-acid chain: Protein Wnt-7 (123 aa).

A lipid anchor (O-palmitoleoyl serine; by PORCN) is attached at serine 1. Cysteine 89 and cysteine 104 are joined by a disulfide. N-linked (GlcNAc...) asparagine glycosylation is present at asparagine 90.

Belongs to the Wnt family. Palmitoleoylation is required for efficient binding to frizzled receptors. Depalmitoleoylation leads to Wnt signaling pathway inhibition.

It is found in the secreted. Its subcellular location is the extracellular space. The protein localises to the extracellular matrix. In terms of biological role, ligand for members of the frizzled family of seven transmembrane receptors. Probable developmental protein. May be a signaling molecule which affects the development of discrete regions of tissues. Is likely to signal over only few cell diameters. This Evasterias troschelii (Mottled sea star) protein is Protein Wnt-7 (WNT-7).